The following is a 448-amino-acid chain: Probable glycine dehydrogenase (decarboxylating) subunit 1 (448 aa).

It belongs to the GcvP family. N-terminal subunit subfamily. As to quaternary structure, the glycine cleavage system is composed of four proteins: P, T, L and H. In this organism, the P 'protein' is a heterodimer of two subunits.

The catalysed reaction is N(6)-[(R)-lipoyl]-L-lysyl-[glycine-cleavage complex H protein] + glycine + H(+) = N(6)-[(R)-S(8)-aminomethyldihydrolipoyl]-L-lysyl-[glycine-cleavage complex H protein] + CO2. The glycine cleavage system catalyzes the degradation of glycine. The P protein binds the alpha-amino group of glycine through its pyridoxal phosphate cofactor; CO(2) is released and the remaining methylamine moiety is then transferred to the lipoamide cofactor of the H protein. The protein is Probable glycine dehydrogenase (decarboxylating) subunit 1 of Staphylococcus epidermidis (strain ATCC 35984 / DSM 28319 / BCRC 17069 / CCUG 31568 / BM 3577 / RP62A).